The primary structure comprises 444 residues: Phosphoglucosamine mutase (444 aa).

The active-site Phosphoserine intermediate is the S103. Residues S103, D241, D243, and D245 each contribute to the Mg(2+) site. S103 carries the phosphoserine modification.

Belongs to the phosphohexose mutase family. Requires Mg(2+) as cofactor. Post-translationally, activated by phosphorylation.

The enzyme catalyses alpha-D-glucosamine 1-phosphate = D-glucosamine 6-phosphate. Its function is as follows. Catalyzes the conversion of glucosamine-6-phosphate to glucosamine-1-phosphate. This is Phosphoglucosamine mutase from Deinococcus radiodurans (strain ATCC 13939 / DSM 20539 / JCM 16871 / CCUG 27074 / LMG 4051 / NBRC 15346 / NCIMB 9279 / VKM B-1422 / R1).